The primary structure comprises 118 residues: Succinate dehydrogenase assembly factor 4, mitochondrial (118 aa).

The transit peptide at 1-30 (MQSVTRQTARVLPQMGKQVSYLSTSGAWRA) directs the protein to the mitochondrion. Residues 65–118 (GKLDEFSRHPYQEKEPLKPWPNQTNPYTGEIGGPAGPEPTRYGDWERKGRVSDF) are disordered. Basic and acidic residues-rich tracts occupy residues 66–81 (KLDEFSRHPYQEKEPL) and 105–118 (RYGDWERKGRVSDF).

Belongs to the SDHAF4 family. In terms of assembly, interacts with SdhA in its FAD-bound form.

It localises to the mitochondrion matrix. Plays an essential role in the assembly of succinate dehydrogenase (SDH), an enzyme complex (also referred to as respiratory complex II) that is a component of both the tricarboxylic acid (TCA) cycle and the mitochondrial electron transport chain, and which couples the oxidation of succinate to fumarate with the reduction of ubiquinone (coenzyme Q) to ubiquinol. Binds to the flavoprotein subunit SdhA in its FAD-bound form, blocking the generation of excess reactive oxygen species (ROS) and facilitating its assembly with the iron-sulfur protein subunit SdhB into the SDH catalytic dimer. This is Succinate dehydrogenase assembly factor 4, mitochondrial from Drosophila melanogaster (Fruit fly).